Reading from the N-terminus, the 246-residue chain is Probable transcriptional regulatory protein TM1040_1893 (246 aa).

The tract at residues 1 to 21 is disordered; sequence MAGHSKWANIQHRKGRQDAAR.

The protein belongs to the TACO1 family.

The protein localises to the cytoplasm. The chain is Probable transcriptional regulatory protein TM1040_1893 from Ruegeria sp. (strain TM1040) (Silicibacter sp.).